The chain runs to 93 residues: Cell division protein CrgA (93 aa).

A run of 2 helical transmembrane segments spans residues 31-51 and 70-90; these read VWFVALFIGLMLIGLVWLMVF and LGPWNYAIAFAFMITGLLLTM.

The protein belongs to the CrgA family.

Its subcellular location is the cell membrane. In terms of biological role, involved in cell division. The sequence is that of Cell division protein CrgA from Mycobacterium avium (strain 104).